Here is a 257-residue protein sequence, read N- to C-terminus: Dihydroorotate dehydrogenase B (NAD(+)), electron transfer subunit (257 aa).

Residues 2-101 enclose the FAD-binding FR-type domain; that stretch reads IRQEKMRVVS…LGPIGNGFPV (100 aa). FAD is bound by residues 52 to 55, 69 to 71, and 76 to 77; these read RPIS, IYR, and GT. Positions 220, 225, 228, and 244 each coordinate [2Fe-2S] cluster.

The protein belongs to the PyrK family. Heterotetramer of 2 PyrK and 2 PyrD type B subunits. [2Fe-2S] cluster is required as a cofactor. FAD serves as cofactor.

The protein operates within pyrimidine metabolism; UMP biosynthesis via de novo pathway; orotate from (S)-dihydroorotate (NAD(+) route): step 1/1. Responsible for channeling the electrons from the oxidation of dihydroorotate from the FMN redox center in the PyrD type B subunit to the ultimate electron acceptor NAD(+). This is Dihydroorotate dehydrogenase B (NAD(+)), electron transfer subunit from Lysinibacillus sphaericus (strain C3-41).